Here is a 1002-residue protein sequence, read N- to C-terminus: Probable transport protein MmpL10 (1002 aa).

12 helical membrane-spanning segments follow: residues 1 to 21 (MVGC…SLAE), 177 to 197 (IAVM…TMLL), 199 to 219 (LVTI…VSLV), 228 to 248 (AIVL…VFLI), 268 to 288 (AMMS…ITFL), 306 to 326 (AIGI…ILVL), 358 to 378 (YLGA…LAHF), 806 to 826 (IVAV…RAIV), 835 to 855 (VVIS…VFLG), 862 to 882 (VPGL…MLLA), 901 to 921 (VRCT…SMSG), and 923 to 943 (LFSS…GILI).

The protein belongs to the resistance-nodulation-cell division (RND) (TC 2.A.6) family. MmpL subfamily.

The protein resides in the cell membrane. In Mycobacterium bovis (strain ATCC BAA-935 / AF2122/97), this protein is Probable transport protein MmpL10 (mmpL10).